The following is a 322-amino-acid chain: NADH-cytochrome b5 reductase 2 (322 aa).

A helical transmembrane segment spans residues 31–48 (LAPIYAAVGITGVGVGLY). The region spanning 72–176 (QGWFDLKLSE…KGPIVKYPWE (105 aa)) is the FAD-binding FR-type domain. 179 to 214 (KHNHICLIAGGTGITPMYQLAREIFKNPEDQTKVTL) lines the FAD pocket.

It belongs to the flavoprotein pyridine nucleotide cytochrome reductase family. FAD serves as cofactor.

Its subcellular location is the mitochondrion outer membrane. The catalysed reaction is 2 Fe(III)-[cytochrome b5] + NADH = 2 Fe(II)-[cytochrome b5] + NAD(+) + H(+). Functionally, may mediate the reduction of outer membrane cytochrome b5. In Aspergillus niger (strain ATCC MYA-4892 / CBS 513.88 / FGSC A1513), this protein is NADH-cytochrome b5 reductase 2 (mcr1).